The primary structure comprises 287 residues: Nucleotide-binding protein VV0445 (287 aa).

An ATP-binding site is contributed by 8–15 (GHSGAGKS). 56–59 (DVRN) contacts GTP.

The protein belongs to the RapZ-like family.

Its function is as follows. Displays ATPase and GTPase activities. This chain is Nucleotide-binding protein VV0445, found in Vibrio vulnificus (strain YJ016).